Consider the following 124-residue polypeptide: Small ribosomal subunit protein uS12 (124 aa).

Residues 1 to 24 (MPTINQLVRRPRKPSVSANKAPAL) are disordered. Asp90 is modified (3-methylthioaspartic acid).

This sequence belongs to the universal ribosomal protein uS12 family. As to quaternary structure, part of the 30S ribosomal subunit. Contacts proteins S8 and S17. May interact with IF1 in the 30S initiation complex.

With S4 and S5 plays an important role in translational accuracy. Functionally, interacts with and stabilizes bases of the 16S rRNA that are involved in tRNA selection in the A site and with the mRNA backbone. Located at the interface of the 30S and 50S subunits, it traverses the body of the 30S subunit contacting proteins on the other side and probably holding the rRNA structure together. The combined cluster of proteins S8, S12 and S17 appears to hold together the shoulder and platform of the 30S subunit. The polypeptide is Small ribosomal subunit protein uS12 (Anaplasma phagocytophilum (strain HZ)).